The sequence spans 96 residues: Co-chaperonin GroES (96 aa).

This sequence belongs to the GroES chaperonin family. In terms of assembly, heptamer of 7 subunits arranged in a ring. Interacts with the chaperonin GroEL.

The protein resides in the cytoplasm. Together with the chaperonin GroEL, plays an essential role in assisting protein folding. The GroEL-GroES system forms a nano-cage that allows encapsulation of the non-native substrate proteins and provides a physical environment optimized to promote and accelerate protein folding. GroES binds to the apical surface of the GroEL ring, thereby capping the opening of the GroEL channel. The sequence is that of Co-chaperonin GroES from Alteromonas mediterranea (strain DSM 17117 / CIP 110805 / LMG 28347 / Deep ecotype).